Here is an 850-residue protein sequence, read N- to C-terminus: Rho guanine nucleotide exchange factor 33 (850 aa).

Basic and acidic residues-rich tracts occupy residues 1–13 (MEKS…ENEH) and 98–113 (EEMQ…EKRR). Disordered regions lie at residues 1-21 (MEKS…NPST) and 98-209 (EEMQ…DENL). The stretch at 54 to 128 (LEEKVKSCRC…KAKKAQKEEH (75 aa)) forms a coiled coil. Low complexity predominate over residues 130–149 (AQAGPASAPAPGSAPTQGSP). The span at 164 to 175 (DFTNMLPSQNYE) shows a compositional bias: polar residues. Residues 273–448 (KRQTVALELL…RVFISHYTLL (176 aa)) form the DH domain. 2 disordered regions span residues 504 to 550 (EMLQ…WELE) and 702 to 850 (AAQA…WGWW). 2 stretches are compositionally biased toward low complexity: residues 510-520 (PSSSSSAPAVS) and 754-770 (APHG…GAPR). Position 766 is an omega-N-methylarginine (Arg-766). A compositionally biased stretch (polar residues) spans 773–783 (FPQQRSQSEKQ). Over residues 784–806 (TYLEEMHLEDATRFCPKEERESE) the composition is skewed to basic and acidic residues. The segment covering 826-835 (SFRKLFKKKN) has biased composition (basic residues).

In Mus musculus (Mouse), this protein is Rho guanine nucleotide exchange factor 33 (Arhgef33).